The primary structure comprises 252 residues: Triosephosphate isomerase (252 aa).

10–12 (NWK) provides a ligand contact to substrate. The active-site Electrophile is His96. Glu168 acts as the Proton acceptor in catalysis. Substrate-binding positions include Gly174, Ser214, and 235 to 236 (GG).

Belongs to the triosephosphate isomerase family. In terms of assembly, homodimer.

It is found in the cytoplasm. It carries out the reaction D-glyceraldehyde 3-phosphate = dihydroxyacetone phosphate. It participates in carbohydrate biosynthesis; gluconeogenesis. Its pathway is carbohydrate degradation; glycolysis; D-glyceraldehyde 3-phosphate from glycerone phosphate: step 1/1. Involved in the gluconeogenesis. Catalyzes stereospecifically the conversion of dihydroxyacetone phosphate (DHAP) to D-glyceraldehyde-3-phosphate (G3P). In Streptococcus pneumoniae serotype 2 (strain D39 / NCTC 7466), this protein is Triosephosphate isomerase.